The primary structure comprises 397 residues: uncharacterized protein (397 aa).

This is an uncharacterized protein from Nostoc sp. (strain PCC 7120 / SAG 25.82 / UTEX 2576).